Reading from the N-terminus, the 1138-residue chain is Eukaryotic translation initiation factor 3 subunit A (1138 aa).

A PCI domain is found at 319 to 502 (LQRMAAHVLL…NSIYFGTDLT (184 aa)). 2 disordered regions span residues 590 to 633 (NNAR…NEIQ) and 817 to 1138 (ERFR…VKRR). Composition is skewed to basic and acidic residues over residues 817–903 (ERFR…RVER), 923–967 (DRNE…KEND), 1003–1049 (GRDD…DQPQ), and 1058–1078 (DSPR…RDVR). A compositionally biased stretch (gly residues) spans 1082 to 1100 (PKEGGGGVSGGGAGGGGGN). A compositionally biased stretch (basic and acidic residues) spans 1107–1128 (PREEKAPPKREQAQDKENKAGD).

Belongs to the eIF-3 subunit A family. In terms of assembly, component of the eukaryotic translation initiation factor 3 (eIF-3) complex. The eIF-3 complex interacts with pix.

It localises to the cytoplasm. Its function is as follows. RNA-binding component of the eukaryotic translation initiation factor 3 (eIF-3) complex, which is involved in protein synthesis of a specialized repertoire of mRNAs and, together with other initiation factors, stimulates binding of mRNA and methionyl-tRNAi to the 40S ribosome. The eIF-3 complex specifically targets and initiates translation of a subset of mRNAs involved in cell proliferation. This chain is Eukaryotic translation initiation factor 3 subunit A, found in Drosophila virilis (Fruit fly).